A 30-amino-acid polypeptide reads, in one-letter code: Elongation factor 1-delta (30 aa).

The protein belongs to the EF-1-beta/EF-1-delta family. EF-1 is composed of 4 subunits: alpha, beta (1B-alpha=beta'), delta (1B-beta), and gamma (1B-gamma).

Its function is as follows. EF-1-beta and EF-1-delta stimulate the exchange of GDP bound to EF-1-alpha to GTP. This chain is Elongation factor 1-delta, found in Populus euphratica (Euphrates poplar).